Here is a 456-residue protein sequence, read N- to C-terminus: Adenylosuccinate synthetase isozyme 2 (456 aa).

Residues 1–24 (MAFAETYPAASSLPNGDCGRPRAR) form a disordered region. Residues 39–45 (GDEGKGK) and 67–69 (GHT) contribute to the GTP site. Catalysis depends on D40, which acts as the Proton acceptor. Mg(2+) is bound by residues D40 and G67. Position 40 (D40) interacts with substrate. IMP-binding positions include 40–43 (DEGK), 65–68 (NAGH), T162, R176, N255, T270, and R334. H68 functions as the Proton donor in the catalytic mechanism. Substrate is bound at residue 330-336 (VTTGRKR). GTP is bound by residues R336, 362 to 364 (KLD), and 444 to 447 (GVGK).

This sequence belongs to the adenylosuccinate synthetase family. In terms of assembly, homodimer. The cofactor is Mg(2+).

It localises to the cytoplasm. The protein resides in the mitochondrion. It catalyses the reaction IMP + L-aspartate + GTP = N(6)-(1,2-dicarboxyethyl)-AMP + GDP + phosphate + 2 H(+). The protein operates within purine metabolism; AMP biosynthesis via de novo pathway; AMP from IMP: step 1/2. With respect to regulation, inhibited competitively by AMP and IMP and non-competitively by fructose 1,6-bisphosphate. Plays an important role in the de novo pathway and in the salvage pathway of purine nucleotide biosynthesis. Catalyzes the first committed step in the biosynthesis of AMP from IMP. In Homo sapiens (Human), this protein is Adenylosuccinate synthetase isozyme 2.